Here is a 1219-residue protein sequence, read N- to C-terminus: A disintegrin and metalloproteinase with thrombospondin motifs 18 (1219 aa).

The N-terminal stretch at 1 to 47 is a signal peptide; sequence MECALLCLCALRAAGPGPPWGPAGLGRLAKALQLCCFCCASVAVALA. Residues 48–284 constitute a propeptide that is removed on maturation; sequence SDSGSSGGSG…EYGGTGRPRR (237 aa). N151 and N190 each carry an N-linked (GlcNAc...) asparagine glycan. Residues 217–248 form a disordered region; it reads YPGSQRTYPGHSPSHTPPASQSQEPEYSHRRW. Polar residues predominate over residues 218-241; it reads PGSQRTYPGHSPSHTPPASQSQEP. A Peptidase M12B domain is found at 293-498; the sequence is LNVETLVVAD…PQAGCLVDEP (206 aa). Cystine bridges form between C369–C420, C395–C402, C414–C493, C453–C477, C521–C546, C532–C553, C541–C572, C566–C577, C601–C638, C605–C643, and C616–C628. H436 contributes to the Zn(2+) binding site. E437 is a catalytic residue. Residues H440 and H446 each coordinate Zn(2+). One can recognise a TSP type-1 1 domain in the interval 589 to 644; the sequence is HGQWSAWSKWSECSRTCGGGVKFQERHCSNPKPQYGGKYCPGSSRIYKLCNINPCP. N-linked (GlcNAc...) asparagine glycosylation is found at N745, N838, N865, and N909. TSP type-1 domains are found at residues 931–990, 991–1049, 1052–1116, and 1121–1176; these read CPAY…NSHA, CPPE…GRCP, NRLQ…RTCP, and AVAS…NFCP. One can recognise a PLAC domain in the interval 1182–1219; it reads DDPSCVDFFSWCHLVPQHGVCNHKFYGKQCCRSCTRKS.

Requires Zn(2+) as cofactor. The precursor is cleaved by a furin endopeptidase. In terms of processing, glycosylated. Can be O-fucosylated by POFUT2 on a serine or a threonine residue found within the consensus sequence C1-X(2)-(S/T)-C2-G of the TSP type-1 repeat domains where C1 and C2 are the first and second cysteine residue of the repeat, respectively. Fucosylated repeats can then be further glycosylated by the addition of a beta-1,3-glucose residue by the glucosyltransferase, B3GALTL. Fucosylation mediates the efficient secretion of ADAMTS family members. Can also be C-glycosylated with one or two mannose molecules on tryptophan residues within the consensus sequence W-X-X-W of the TPRs, and N-glycosylated. These other glycosylations can also facilitate secretion.

It is found in the secreted. It localises to the extracellular space. The protein localises to the extracellular matrix. This is A disintegrin and metalloproteinase with thrombospondin motifs 18 (Adamts18) from Mus musculus (Mouse).